We begin with the raw amino-acid sequence, 205 residues long: Holliday junction branch migration complex subunit RuvA (205 aa).

Positions 1–64 are domain I; the sequence is MIGRLKGILI…ENLHQLFGFA (64 aa). The segment at 65-143 is domain II; that stretch reads EQRDRSLFRT…NWDLPQGDML (79 aa). Positions 144 to 153 are flexible linker; the sequence is AHGEIQAIAS. Residues 153 to 205 form a domain III region; that stretch reads SDNDIYAEAESALIALGYKPVDAAKMVASAAKQKPEARSEELIRIALRSLAGV.

It belongs to the RuvA family. In terms of assembly, homotetramer. Forms an RuvA(8)-RuvB(12)-Holliday junction (HJ) complex. HJ DNA is sandwiched between 2 RuvA tetramers; dsDNA enters through RuvA and exits via RuvB. An RuvB hexamer assembles on each DNA strand where it exits the tetramer. Each RuvB hexamer is contacted by two RuvA subunits (via domain III) on 2 adjacent RuvB subunits; this complex drives branch migration. In the full resolvosome a probable DNA-RuvA(4)-RuvB(12)-RuvC(2) complex forms which resolves the HJ.

It is found in the cytoplasm. The RuvA-RuvB-RuvC complex processes Holliday junction (HJ) DNA during genetic recombination and DNA repair, while the RuvA-RuvB complex plays an important role in the rescue of blocked DNA replication forks via replication fork reversal (RFR). RuvA specifically binds to HJ cruciform DNA, conferring on it an open structure. The RuvB hexamer acts as an ATP-dependent pump, pulling dsDNA into and through the RuvAB complex. HJ branch migration allows RuvC to scan DNA until it finds its consensus sequence, where it cleaves and resolves the cruciform DNA. This chain is Holliday junction branch migration complex subunit RuvA, found in Cellvibrio japonicus (strain Ueda107) (Pseudomonas fluorescens subsp. cellulosa).